A 276-amino-acid polypeptide reads, in one-letter code: Small ribosomal subunit protein uS3 (276 aa).

The KH type-2 domain occupies 39 to 110; it reads IRRETMKFLK…KINIKIKEIK (72 aa).

Belongs to the universal ribosomal protein uS3 family. As to quaternary structure, part of the 30S ribosomal subunit. Forms a tight complex with proteins S10 and S14.

Its function is as follows. Binds the lower part of the 30S subunit head. Binds mRNA in the 70S ribosome, positioning it for translation. This is Small ribosomal subunit protein uS3 from Borrelia recurrentis (strain A1).